The following is a 167-amino-acid chain: Urease accessory protein UreE (167 aa).

It belongs to the UreE family.

It is found in the cytoplasm. Its function is as follows. Involved in urease metallocenter assembly. Binds nickel. Probably functions as a nickel donor during metallocenter assembly. The polypeptide is Urease accessory protein UreE (Pseudomonas aeruginosa (strain LESB58)).